Here is a 241-residue protein sequence, read N- to C-terminus: 1-(5-phosphoribosyl)-5-[(5-phosphoribosylamino)methylideneamino] imidazole-4-carboxamide isomerase (241 aa).

Aspartate 10 acts as the Proton acceptor in catalysis. The active-site Proton donor is aspartate 131.

This sequence belongs to the HisA/HisF family.

It is found in the cytoplasm. The enzyme catalyses 1-(5-phospho-beta-D-ribosyl)-5-[(5-phospho-beta-D-ribosylamino)methylideneamino]imidazole-4-carboxamide = 5-[(5-phospho-1-deoxy-D-ribulos-1-ylimino)methylamino]-1-(5-phospho-beta-D-ribosyl)imidazole-4-carboxamide. It functions in the pathway amino-acid biosynthesis; L-histidine biosynthesis; L-histidine from 5-phospho-alpha-D-ribose 1-diphosphate: step 4/9. The chain is 1-(5-phosphoribosyl)-5-[(5-phosphoribosylamino)methylideneamino] imidazole-4-carboxamide isomerase from Bifidobacterium longum subsp. infantis (strain ATCC 15697 / DSM 20088 / JCM 1222 / NCTC 11817 / S12).